The chain runs to 521 residues: MLDANLKTQLKAYLEKVSQPFEIVASLDDSDKSRELLGLLQDIVGLTDKITLKTDGSDARKPSFSLNRPGADIGLRFAGIPMGHEFTSLVLALLQVGGHPSKLDADVIEQVKGIEGTFEFETYFSLSCQNCPDVVQALNLMAVLNPNIRHVAIDGALFQDEVEARQIMSVPSIYLNGEVFGQGRMGVEEILAKIDTGAAARDAEKLTARDAFDVLVVGGGPAGAAAAIYAARKGIRTGVAAERFGGQVLDTMAIENFISVQETEGPKLARALEEHVRHYEVDIMNLQRASKLVPAKNAGELHEVRFESGGSLKAKTLILATGARWREMGVPGEQEYKAKGVCFCPHCDGPLFKGKRVAVIGGGNSGVEAAIDLAGIVAHVTLLEFDSKLRADAVLQRKLYSLPNVEVITSALTSEVKGDGQKVTGLVYKDRNSEEFKSIELEGIFVQIGLLPNTEWLKGSVELSPRGEIIVDARGETSLPGIFAAGDVTTVPYKQIVIAVGEGAKASLSAFDHLIRTSAPE.

213-228 (DVLVVGGGPAGAAAAI) is an FAD binding site. The cysteines at positions 344 and 347 are disulfide-linked. 356–370 (RVAVIGGGNSGVEAA) is a binding site for NAD(+). 477 to 487 (TSLPGIFAAGD) contributes to the FAD binding site.

Belongs to the class-II pyridine nucleotide-disulfide oxidoreductase family. In terms of assembly, homodimer. FAD serves as cofactor.

Serves to protect the cell against DNA damage by alkyl hydroperoxides. It can use either NADH or NADPH as electron donor for direct reduction of redox dyes or of alkyl hydroperoxides when combined with the AhpC protein. This chain is Alkyl hydroperoxide reductase subunit F (ahpF), found in Pseudomonas aeruginosa (strain ATCC 15692 / DSM 22644 / CIP 104116 / JCM 14847 / LMG 12228 / 1C / PRS 101 / PAO1).